A 189-amino-acid chain; its full sequence is Interferon alpha-C (189 aa).

An N-terminal signal peptide occupies residues 1–23; it reads MAPAWSFRLALLLLSCNAICSLG. Intrachain disulfides connect Cys24–Cys122 and Cys52–Cys162.

It belongs to the alpha/beta interferon family.

The protein localises to the secreted. Functionally, produced by macrophages, IFN-alpha have antiviral activities. Interferon stimulates the production of two enzymes: a protein kinase and an oligoadenylate synthetase. This chain is Interferon alpha-C (IFNAC), found in Bos taurus (Bovine).